A 326-amino-acid polypeptide reads, in one-letter code: MFISISAGIVTFLLTLVGIPAFIQFYRKAQITGQQMHEDVKQHQAKAGTPTMGGLVFLIAAVVVSFLVALFSKQLTNNVGMILFILVLYGLVGFLDDFLKVFRKINEGLNPKQKLALQLLGGVIFYLFYERGGDMLSVFGYQVHLGIFYIIFALFWLVGFSNAVNLTDGIDGLASISVVISLSAYGVIAYVQGQMDILLVIFAMIGGLLGFFVFNHKPAKVFMGDVGSLALGGMLAAISMALHQEWTLLIIGIVYVFETTSVMMQVSYFKLTGGKRIFRMTPVHHHFELGGLSGKGNPWSEWKVDFFFWGVGLLASLLTFAILYLM.

The next 9 membrane-spanning stretches (helical) occupy residues 3 to 23, 51 to 71, 79 to 99, 115 to 135, 138 to 158, 169 to 189, 195 to 215, 221 to 243, and 306 to 326; these read ISIS…PAFI, TMGG…VALF, VGMI…DDFL, LALQ…GGDM, VFGY…FWLV, GIDG…GVIA, MDIL…FVFN, VFMG…MALH, and FFFW…LYLM.

It belongs to the glycosyltransferase 4 family. MraY subfamily. It depends on Mg(2+) as a cofactor.

The protein resides in the cell membrane. It carries out the reaction UDP-N-acetyl-alpha-D-muramoyl-L-alanyl-gamma-D-glutamyl-L-lysyl-D-alanyl-D-alanine + di-trans,octa-cis-undecaprenyl phosphate = Mur2Ac(oyl-L-Ala-gamma-D-Glu-L-Lys-D-Ala-D-Ala)-di-trans,octa-cis-undecaprenyl diphosphate + UMP. The protein operates within cell wall biogenesis; peptidoglycan biosynthesis. Catalyzes the initial step of the lipid cycle reactions in the biosynthesis of the cell wall peptidoglycan: transfers peptidoglycan precursor phospho-MurNAc-pentapeptide from UDP-MurNAc-pentapeptide onto the lipid carrier undecaprenyl phosphate, yielding undecaprenyl-pyrophosphoryl-MurNAc-pentapeptide, known as lipid I. The protein is Phospho-N-acetylmuramoyl-pentapeptide-transferase of Streptococcus pneumoniae (strain Taiwan19F-14).